The chain runs to 390 residues: Succinyl-diaminopimelate desuccinylase (390 aa).

His-74 lines the Zn(2+) pocket. The active site involves Asp-76. Zn(2+) is bound at residue Asp-107. Glu-140 functions as the Proton acceptor in the catalytic mechanism. Zn(2+) is bound by residues Glu-141, Glu-169, and His-363.

Belongs to the peptidase M20A family. DapE subfamily. In terms of assembly, homodimer. It depends on Zn(2+) as a cofactor. Co(2+) is required as a cofactor.

The catalysed reaction is N-succinyl-(2S,6S)-2,6-diaminopimelate + H2O = (2S,6S)-2,6-diaminopimelate + succinate. It functions in the pathway amino-acid biosynthesis; L-lysine biosynthesis via DAP pathway; LL-2,6-diaminopimelate from (S)-tetrahydrodipicolinate (succinylase route): step 3/3. In terms of biological role, catalyzes the hydrolysis of N-succinyl-L,L-diaminopimelic acid (SDAP), forming succinate and LL-2,6-diaminopimelate (DAP), an intermediate involved in the bacterial biosynthesis of lysine and meso-diaminopimelic acid, an essential component of bacterial cell walls. The protein is Succinyl-diaminopimelate desuccinylase of Bartonella bacilliformis (strain ATCC 35685 / KC583 / Herrer 020/F12,63).